The chain runs to 117 residues: DNA-directed RNA polymerase subunit omega (117 aa).

Belongs to the RNA polymerase subunit omega family. In terms of assembly, the RNAP catalytic core consists of 2 alpha, 1 beta, 1 beta' and 1 omega subunit. When a sigma factor is associated with the core the holoenzyme is formed, which can initiate transcription.

It carries out the reaction RNA(n) + a ribonucleoside 5'-triphosphate = RNA(n+1) + diphosphate. Functionally, promotes RNA polymerase assembly. Latches the N- and C-terminal regions of the beta' subunit thereby facilitating its interaction with the beta and alpha subunits. The protein is DNA-directed RNA polymerase subunit omega of Roseobacter denitrificans (strain ATCC 33942 / OCh 114) (Erythrobacter sp. (strain OCh 114)).